We begin with the raw amino-acid sequence, 276 residues long: Large ribosomal subunit protein uL2 (276 aa).

The interval 225-276 (MNPNDHPHGGGEGRNPIGRNPVTPWGKPALGAKTRKKKNPSNRFIVKRRGKK) is disordered. The segment covering 257 to 276 (KTRKKKNPSNRFIVKRRGKK) has biased composition (basic residues).

This sequence belongs to the universal ribosomal protein uL2 family. In terms of assembly, part of the 50S ribosomal subunit. Forms a bridge to the 30S subunit in the 70S ribosome.

Its function is as follows. One of the primary rRNA binding proteins. Required for association of the 30S and 50S subunits to form the 70S ribosome, for tRNA binding and peptide bond formation. It has been suggested to have peptidyltransferase activity; this is somewhat controversial. Makes several contacts with the 16S rRNA in the 70S ribosome. This chain is Large ribosomal subunit protein uL2, found in Desulfitobacterium hafniense (strain DSM 10664 / DCB-2).